The chain runs to 151 residues: Ribosomal RNA large subunit methyltransferase H (151 aa).

Residues L73, G100, and 119-124 (LSKMTM) each bind S-adenosyl-L-methionine.

Belongs to the RNA methyltransferase RlmH family. In terms of assembly, homodimer.

Its subcellular location is the cytoplasm. The catalysed reaction is pseudouridine(1915) in 23S rRNA + S-adenosyl-L-methionine = N(3)-methylpseudouridine(1915) in 23S rRNA + S-adenosyl-L-homocysteine + H(+). Specifically methylates the pseudouridine at position 1915 (m3Psi1915) in 23S rRNA. This Campylobacter concisus (strain 13826) protein is Ribosomal RNA large subunit methyltransferase H.